The following is a 482-amino-acid chain: tRNA sulfurtransferase (482 aa).

A THUMP domain is found at 61–165 (LVIRDALTRI…DDRLLLIKGR (105 aa)). ATP is bound by residues 183–184 (LI), lysine 265, glycine 287, and glutamine 296. Cysteine 344 and cysteine 456 are joined by a disulfide. The Rhodanese domain occupies 404–482 (FGPNDVILDI…GFANVKVYRP (79 aa)). Cysteine 456 acts as the Cysteine persulfide intermediate in catalysis.

Belongs to the ThiI family.

It is found in the cytoplasm. It catalyses the reaction [ThiI sulfur-carrier protein]-S-sulfanyl-L-cysteine + a uridine in tRNA + 2 reduced [2Fe-2S]-[ferredoxin] + ATP + H(+) = [ThiI sulfur-carrier protein]-L-cysteine + a 4-thiouridine in tRNA + 2 oxidized [2Fe-2S]-[ferredoxin] + AMP + diphosphate. It carries out the reaction [ThiS sulfur-carrier protein]-C-terminal Gly-Gly-AMP + S-sulfanyl-L-cysteinyl-[cysteine desulfurase] + AH2 = [ThiS sulfur-carrier protein]-C-terminal-Gly-aminoethanethioate + L-cysteinyl-[cysteine desulfurase] + A + AMP + 2 H(+). Its pathway is cofactor biosynthesis; thiamine diphosphate biosynthesis. In terms of biological role, catalyzes the ATP-dependent transfer of a sulfur to tRNA to produce 4-thiouridine in position 8 of tRNAs, which functions as a near-UV photosensor. Also catalyzes the transfer of sulfur to the sulfur carrier protein ThiS, forming ThiS-thiocarboxylate. This is a step in the synthesis of thiazole, in the thiamine biosynthesis pathway. The sulfur is donated as persulfide by IscS. This Salmonella typhimurium (strain LT2 / SGSC1412 / ATCC 700720) protein is tRNA sulfurtransferase.